The following is a 1311-amino-acid chain: Kinase and exchange factor for Rac A (1311 aa).

In terms of domain architecture, Protein kinase spans 18–316 (LVFKDIIGKG…STIVTILESI (299 aa)). ATP contacts are provided by residues 24-32 (IGKGNFGCV) and K45. The active-site Proton acceptor is the D138. 3 disordered regions span residues 169-201 (NGSD…KNNG), 360-426 (QQQS…TTTT), and 446-471 (PLSK…LIGS). Residues 451–471 (QQQQQRNQNSSIIDNNSLIGS) are compositionally biased toward low complexity. The 30-residue stretch at 650–679 (ELNLIIKLQSRIRGWLVRRRYKIFLSNWKL) folds into the IQ domain. Positions 691–927 (QWIRLFNQLI…RETSNYIQSQ (237 aa)) constitute a DH domain. Low complexity-rich tracts occupy residues 994-1021 (SKYN…TNSN) and 1031-1044 (STSN…GNNN). 3 disordered regions span residues 994-1044 (SKYN…GNNN), 1114-1145 (NNPN…NGSI), and 1208-1311 (GTST…FSKD). Over residues 1117–1137 (NGGGSNNNSIGGGGGGRGGSG) the composition is skewed to gly residues. Residues 1208 to 1229 (GTSTPERKTSLVNMSPSTTSSL) show a composition bias toward polar residues. Low complexity predominate over residues 1230–1245 (NNIDSNYNNNNNNVTN). Positions 1246 to 1257 (TPIKSVTSSPSI) are enriched in polar residues. Residues 1263 to 1276 (NDNNQQPQLPSQPN) show a composition bias toward low complexity. Polar residues predominate over residues 1277–1287 (EEFQFTVPTTP). Basic residues predominate over residues 1290 to 1303 (KKKKRGSFSSKLKR).

This sequence belongs to the protein kinase superfamily. TKL Ser/Thr protein kinase family. The cofactor is Mg(2+).

The catalysed reaction is L-seryl-[protein] + ATP = O-phospho-L-seryl-[protein] + ADP + H(+). It carries out the reaction L-threonyl-[protein] + ATP = O-phospho-L-threonyl-[protein] + ADP + H(+). The sequence is that of Kinase and exchange factor for Rac A (kxcA) from Dictyostelium discoideum (Social amoeba).